The sequence spans 718 residues: Phospholipid phosphatase-related protein type 3 (718 aa).

The next 3 helical transmembrane spans lie at 18–38 (LPCFYFVELPIVASSIVSLYF), 70–90 (LIPLLMLLSLAFAAPAASIMV), and 133–153 (FVGVHVFGLCATALVTDVIQL). The N-linked (GlcNAc...) asparagine glycan is linked to asparagine 169. A run of 3 helical transmembrane segments spans residues 207–227 (HATLSAFAAVYVSMYFNSVIS), 233–253 (LKPILVFAFAIAAGVCGLTQI), and 263–283 (VYAGFLIGAGIAAYLACHAVG). The disordered stretch occupies residues 313 to 347 (SVYQQNKSVSTDELGPPGRLEGAPRPVAREKTSLG). Residues 314-323 (VYQQNKSVST) show a composition bias toward polar residues. The N-linked (GlcNAc...) asparagine glycan is linked to asparagine 318. Phosphoserine is present on residues serine 322 and serine 353. Threonine 376 is subject to Phosphothreonine. A disordered region spans residues 416 to 488 (LEGRGLGLPD…GPRVILPPRA (73 aa)). Position 428 is a phosphoserine (serine 428). A compositionally biased stretch (acidic residues) spans 439-462 (MAEEEEEEEDEEEEEEEEEEEDEG). At serine 508 the chain carries Phosphoserine. Low complexity predominate over residues 545-571 (APGAPGPKAAETASSSSASSDSSQYRS). The tract at residues 545–577 (APGAPGPKAAETASSSSASSDSSQYRSPSDRDS) is disordered. At serine 641 the chain carries Phosphoserine. Over residues 664–680 (GEGLPPLGAADGALGPG) the composition is skewed to low complexity. The interval 664–702 (GEGLPPLGAADGALGPGSRESTLRRHAGGLGLAEREAEA) is disordered.

This sequence belongs to the PA-phosphatase related phosphoesterase family.

The protein localises to the membrane. This chain is Phospholipid phosphatase-related protein type 3, found in Homo sapiens (Human).